A 33-amino-acid polypeptide reads, in one-letter code: uncharacterized protein (33 aa).

The segment at 1-33 (MGSVIKKRRKRMSKKKHRKLLRRTRVQRRKLGK) is disordered.

This is an uncharacterized protein from Mycobacterium tuberculosis (strain CDC 1551 / Oshkosh).